A 220-amino-acid polypeptide reads, in one-letter code: 7-cyano-7-deazaguanine synthase (220 aa).

Residue 10–20 (FSGGQDSTTCL) participates in ATP binding. Zn(2+)-binding residues include C186, C195, C198, and C201.

It belongs to the QueC family. In terms of assembly, homodimer. The cofactor is Zn(2+).

It catalyses the reaction 7-carboxy-7-deazaguanine + NH4(+) + ATP = 7-cyano-7-deazaguanine + ADP + phosphate + H2O + H(+). It participates in purine metabolism; 7-cyano-7-deazaguanine biosynthesis. In terms of biological role, catalyzes the ATP-dependent conversion of 7-carboxy-7-deazaguanine (CDG) to 7-cyano-7-deazaguanine (preQ(0)). This chain is 7-cyano-7-deazaguanine synthase, found in Bacillus cereus (strain G9842).